The following is a 139-amino-acid chain: Glucanase inhibitor protein 3 (139 aa).

The 138-residue stretch at 1–138 (VLTLEKPSKF…GIEWINSVIK (138 aa)) folds into the Peptidase S1 domain. 2 cysteine pairs are disulfide-bonded: C61–C73 and C83–C114.

Belongs to the peptidase S1 family.

It is found in the secreted. In terms of biological role, secreted effector that suppresses host plant glucan elicitor-mediated defense responses. Targets host endoglucanases and inhibits the endoglucanase-mediated release of elicitor-active glucan oligosaccharides from P.sojae cell walls. This is Glucanase inhibitor protein 3 from Phytophthora sojae (Soybean stem and root rot agent).